The chain runs to 447 residues: Drebrin-like protein A (447 aa).

Residues 2 to 133 enclose the ADF-H domain; the sequence is SVNLSKNGAA…EPESIMEKVA (132 aa). 2 disordered regions span residues 141–160 and 184–368; these read NFHKESKRGNEGPQGPVGSV and KDEE…TENQ. Residues 180 to 245 are a coiled coil; it reads AKAEKDEEER…EQEETEKQQT (66 aa). Residues 184–242 are compositionally biased toward basic and acidic residues; the sequence is KDEEERRMEENRRANSEKDRLERERKEREQREAETREQRFRERAKEIDAQRKEQEETEK. The segment covering 246 to 255 has biased composition (polar residues); it reads VPASQRSVNP. Residues 319 to 328 are compositionally biased toward pro residues; the sequence is PESPVPPVSH. The span at 345-365 shows a compositional bias: acidic residues; that stretch reads QEEENIYQDATEDQNIYEDTT. Residues 388–447 enclose the SH3 domain; sequence EKGVCARALYDYQAADDTEISFDPDDLITQIQFIDEGWWRGFSPAGHFGMFPANYVELLE.

It belongs to the ABP1 family.

It localises to the cytoplasm. It is found in the cytoskeleton. The protein localises to the cell projection. The protein resides in the lamellipodium. Its subcellular location is the ruffle. It localises to the cell cortex. It is found in the cytosol. The protein localises to the synapse. The protein resides in the perikaryon. Its subcellular location is the neuron projection. It localises to the cell membrane. It is found in the cytoplasmic vesicle. The protein localises to the clathrin-coated vesicle membrane. The protein resides in the golgi apparatus membrane. Its subcellular location is the podosome. It localises to the early endosome. It is found in the dendrite. The protein localises to the postsynaptic density. In terms of biological role, adapter protein that binds F-actin and dynamin, and thereby plays a role in receptor-mediated endocytosis. Plays a role in the reorganization of the actin cytoskeleton, formation of cell projections, such as neurites, in neuron morphogenesis and synapse formation. Does not bind G-actin and promote actin polymerization by itself, but excerts its functions by interaction with other proteins. Required for the formation of organized podosome rosettes. The chain is Drebrin-like protein A (dbnl-a) from Xenopus laevis (African clawed frog).